The primary structure comprises 633 residues: Probably inactive receptor-like protein kinase At2g46850 (633 aa).

Residues 1–28 form the signal peptide; that stretch reads MPPLFLPSSSSALFLLLLLLLTLQTLTS. Over 29-285 the chain is Extracellular; that stretch reads ISLSQPQALR…IKKHNGKKLT (257 aa). N-linked (GlcNAc...) asparagine glycans are attached at residues Asn-45, Asn-69, and Asn-231. A helical transmembrane segment spans residues 286 to 306; the sequence is VLAGVLAPLFILGSLLALFCL. At 307 to 633 the chain is on the cytoplasmic side; it reads LKRPVTSHKD…SPDSIYLPKT (327 aa). One can recognise a Protein kinase domain in the interval 355–633; it reads FQDSQKLTQG…SPDSIYLPKT (279 aa). Residues 361–369 and Lys-384 each bind ATP; that span reads LTQGKTGTI.

Belongs to the protein kinase superfamily. Ser/Thr protein kinase family.

It is found in the membrane. This is Probably inactive receptor-like protein kinase At2g46850 from Arabidopsis thaliana (Mouse-ear cress).